Here is a 493-residue protein sequence, read N- to C-terminus: Tripartite motif-containing protein 5 (493 aa).

The residue at position 2 (Ala2) is an N-acetylalanine. Residues 15–59 (CPICLELLTQPLSLDCGHSFCQACLTANHKKSMLDKGESSCPVCR) form an RING-type zinc finger. Residue Ser86 is modified to Phosphoserine. The segment at 90–132 (QKVDHCAHHGEKLLLFCQEDGKVICWLCERSQEHRGHHTFLTE) adopts a B box-type zinc-finger fold. Zn(2+)-binding residues include Cys95, His98, Cys117, and His123. Residues 131–240 (TEEVAREYQV…LISDLERRLQ (110 aa)) adopt a coiled-coil conformation. The tract at residues 185–198 (FEQLRDILDWEESN) is required for interaction with GABARAP and for autophagy. The 213-residue stretch at 281–493 (LKGMLEVFRE…VPMTLCSPSS (213 aa)) folds into the B30.2/SPRY domain.

Belongs to the TRIM/RBCC family. Can form homodimers and homotrimers. In addition to lower-order dimerization, also exhibits a higher-order multimerization and both low- and high-order multimerizations are essential for its restriction activity. Interacts with BTBD1 and BTBD2. Interacts with PSMC4, PSMC5, PSMD7 and HSPA8/HSC70. Interacts (via B30.2/SPRY domain) with HSPA1A/B. Interacts with PSMC2, MAP3K7/TAK1, TAB2 and TAB3. Interacts with SQSTM1. Interacts with TRIM6 and TRIM34. Interacts with ULK1 (phosphorylated form), GABARAP, GABARAPL1, GABARAPL2, MAP1LC3A, MAP1LC3C and BECN1. In terms of processing, degraded in a proteasome-independent fashion in the absence of viral infection but in a proteasome-dependent fashion following exposure to restriction sensitive virus. Autoubiquitinated in a RING finger- and UBE2D2-dependent manner. Monoubiquitinated by TRIM21. Deubiquitinated by Yersinia YopJ. Ubiquitination may not lead to proteasomal degradation.

It localises to the cytoplasm. The protein localises to the nucleus. It carries out the reaction S-ubiquitinyl-[E2 ubiquitin-conjugating enzyme]-L-cysteine + [acceptor protein]-L-lysine = [E2 ubiquitin-conjugating enzyme]-L-cysteine + N(6)-ubiquitinyl-[acceptor protein]-L-lysine.. It participates in protein modification; protein ubiquitination. In terms of biological role, capsid-specific restriction factor that prevents infection from non-host-adapted retroviruses. Blocks viral replication early in the life cycle, after viral entry but before reverse transcription. In addition to acting as a capsid-specific restriction factor, also acts as a pattern recognition receptor that activates innate immune signaling in response to the retroviral capsid lattice. Binding to the viral capsid triggers its E3 ubiquitin ligase activity, and in concert with the heterodimeric ubiquitin conjugating enzyme complex UBE2V1-UBE2N (also known as UBC13-UEV1A complex) generates 'Lys-63'-linked polyubiquitin chains, which in turn are catalysts in the autophosphorylation of the MAP3K7/TAK1 complex (includes TAK1, TAB2, and TAB3). Activation of the MAP3K7/TAK1 complex by autophosphorylation results in the induction and expression of NF-kappa-B and MAPK-responsive inflammatory genes, thereby leading to an innate immune response in the infected cell. Plays a role in regulating autophagy through activation of autophagy regulator BECN1 by causing its dissociation from its inhibitors BCL2 and TAB2. This Pan troglodytes (Chimpanzee) protein is Tripartite motif-containing protein 5 (TRIM5).